We begin with the raw amino-acid sequence, 436 residues long: Aminopeptidase C (436 aa).

Residues cysteine 68, histidine 356, and asparagine 378 contribute to the active site.

This sequence belongs to the peptidase C1 family. Homohexamer.

It catalyses the reaction Inactivates bleomycin B2 (a cytotoxic glycometallopeptide) by hydrolysis of a carboxyamide bond of beta-aminoalanine, but also shows general aminopeptidase activity. The specificity varies somewhat with source, but amino acid arylamides of Met, Leu and Ala are preferred.. Hydrolyzes naphthylamide-substituted amino acids as well as di- and tripeptides in which the half-cystine residue is involved in a disulfide loop, notably in oxytocin and vasopressin. Also has a bleomycin hydrolase activity. The protein is Aminopeptidase C (pepC) of Lactococcus lactis subsp. lactis (strain IL1403) (Streptococcus lactis).